A 264-amino-acid chain; its full sequence is [LysW]-aminoadipate/[LysW]-glutamate kinase (264 aa).

Substrate-binding positions include 35–36 (GG), Arg62, and Asn167.

This sequence belongs to the acetylglutamate kinase family. LysZ subfamily.

The protein resides in the cytoplasm. The catalysed reaction is [amino-group carrier protein]-C-terminal-N-(1,4-dicarboxybutan-1-yl)-L-glutamine + ATP = [amino-group carrier protein]-C-terminal-N-(1-carboxy-5-phosphooxy-5-oxopentan-1-yl)-L-glutamine + ADP. The enzyme catalyses [amino-group carrier protein]-C-terminal-gamma-(L-glutamyl)-L-glutamate + ATP = [amino-group carrier protein]-C-terminal-gamma-(5-phospho-L-glutamyl)-L-glutamate + ADP. Its pathway is amino-acid biosynthesis; L-lysine biosynthesis via AAA pathway; L-lysine from L-alpha-aminoadipate (Thermus route): step 2/5. It participates in amino-acid biosynthesis; L-arginine biosynthesis. Its function is as follows. Involved in both the arginine and lysine biosynthetic pathways. Phosphorylates the LysW-bound precursors glutamate (for arginine biosynthesis), respectively alpha-aminoadipate (for lysine biosynthesis). The polypeptide is [LysW]-aminoadipate/[LysW]-glutamate kinase (Saccharolobus islandicus (strain L.S.2.15 / Lassen #1) (Sulfolobus islandicus)).